We begin with the raw amino-acid sequence, 224 residues long: MEKERDVAQEQATYEQESPNAERQEELKENEHQEKNAPEEQEKVREENGRQDAQKDEIGDPEKAKEEQNEELAAANAKIAELEAKIKEMENRYLRLYADFENFRRRTRREMEAAEKYRAQSLVSDLLPVLDNFERALKIKAEDEQAKSILQGMEMVYRSVLDALKKEGVEAIEAVGKPFDPHLHQAVMQVEDSNYEPNTVVEELQKGYKLKDRVIRPAMVKVSQ.

The interval 1–72 (MEKERDVAQE…KAKEEQNEEL (72 aa)) is disordered. Residues 10–19 (EQATYEQESP) are compositionally biased toward polar residues. A compositionally biased stretch (basic and acidic residues) spans 20-67 (NAERQEELKENEHQEKNAPEEQEKVREENGRQDAQKDEIGDPEKAKEE).

Belongs to the GrpE family. Homodimer.

It localises to the cytoplasm. Its function is as follows. Participates actively in the response to hyperosmotic and heat shock by preventing the aggregation of stress-denatured proteins, in association with DnaK and GrpE. It is the nucleotide exchange factor for DnaK and may function as a thermosensor. Unfolded proteins bind initially to DnaJ; upon interaction with the DnaJ-bound protein, DnaK hydrolyzes its bound ATP, resulting in the formation of a stable complex. GrpE releases ADP from DnaK; ATP binding to DnaK triggers the release of the substrate protein, thus completing the reaction cycle. Several rounds of ATP-dependent interactions between DnaJ, DnaK and GrpE are required for fully efficient folding. The sequence is that of Protein GrpE from Parageobacillus thermoglucosidasius (Geobacillus thermoglucosidasius).